Consider the following 420-residue polypeptide: UDP-N-acetylglucosamine 1-carboxyvinyltransferase (420 aa).

Position 22–23 (22–23 (KN)) interacts with phosphoenolpyruvate. UDP-N-acetyl-alpha-D-glucosamine is bound at residue arginine 91. The Proton donor role is filled by cysteine 115. Cysteine 115 is subject to 2-(S-cysteinyl)pyruvic acid O-phosphothioketal. UDP-N-acetyl-alpha-D-glucosamine is bound by residues 120-124 (RPVDL), 160-163 (KVSV), aspartate 305, and isoleucine 327.

Belongs to the EPSP synthase family. MurA subfamily.

It localises to the cytoplasm. The catalysed reaction is phosphoenolpyruvate + UDP-N-acetyl-alpha-D-glucosamine = UDP-N-acetyl-3-O-(1-carboxyvinyl)-alpha-D-glucosamine + phosphate. Its pathway is cell wall biogenesis; peptidoglycan biosynthesis. In terms of biological role, cell wall formation. Adds enolpyruvyl to UDP-N-acetylglucosamine. The protein is UDP-N-acetylglucosamine 1-carboxyvinyltransferase of Proteus mirabilis (strain HI4320).